The following is a 498-amino-acid chain: ATP synthase subunit alpha, chloroplastic (498 aa).

170–177 (GDRQTGKT) is a binding site for ATP.

The protein belongs to the ATPase alpha/beta chains family. As to quaternary structure, F-type ATPases have 2 components, CF(1) - the catalytic core - and CF(0) - the membrane proton channel. CF(1) has five subunits: alpha(3), beta(3), gamma(1), delta(1), epsilon(1). CF(0) has four main subunits: a, b, b' and c.

It is found in the plastid. The protein resides in the chloroplast thylakoid membrane. The catalysed reaction is ATP + H2O + 4 H(+)(in) = ADP + phosphate + 5 H(+)(out). Functionally, produces ATP from ADP in the presence of a proton gradient across the membrane. The alpha chain is a regulatory subunit. This is ATP synthase subunit alpha, chloroplastic from Oltmannsiellopsis viridis (Marine flagellate).